We begin with the raw amino-acid sequence, 341 residues long: Basic membrane protein B (341 aa).

The signal sequence occupies residues 1–14 (MRIVIFILGILLTS). The N-palmitoyl cysteine moiety is linked to residue cysteine 15. The S-diacylglycerol cysteine moiety is linked to residue cysteine 15.

It belongs to the BMP lipoprotein family. As to quaternary structure, monomer.

It is found in the cell inner membrane. In terms of biological role, may be part of an ABC-type nucleoside uptake system involved in the purine salvage pathway. This Borrelia garinii subsp. bavariensis (strain ATCC BAA-2496 / DSM 23469 / PBi) (Borreliella bavariensis) protein is Basic membrane protein B (bmpB).